The sequence spans 686 residues: Rhophilin-2 (686 aa).

Residues 26 to 100 form the REM-1 domain; that stretch reads NPLAQTGRSK…LEGLNISVGV (75 aa). Residues 46–66 form an interaction with Rho region; it reads QILKAMRMRTGAENLLKAATN. In terms of domain architecture, BRO1 spans 111–460; it reads PLIPLGLKET…QLKYTQLRED (350 aa). The region spanning 515-593 is the PDZ domain; it reads RSIHFTAEEG…DDIEMKVVSL (79 aa). Position 655 is a phosphothreonine (T655).

This sequence belongs to the RHPN family. In terms of assembly, interacts with GTP-bound RhoA and RhoB. Interacts with both GTP- and GDP-bound RhoA. Interacts with KRT18.

It is found in the cytoplasm. The protein localises to the perinuclear region. Functionally, binds specifically to GTP-Rho. May function in a Rho pathway to limit stress fiber formation and/or increase the turnover of F-actin structures in the absence of high levels of RhoA activity. The chain is Rhophilin-2 (RHPN2) from Bos taurus (Bovine).